The chain runs to 264 residues: Eukaryotic translation initiation factor 6 (264 aa).

This sequence belongs to the eIF-6 family. In terms of assembly, monomer. Associates with the 60S ribosomal subunit.

It localises to the cytoplasm. Its subcellular location is the nucleus. The protein resides in the nucleolus. Functionally, binds to the 60S ribosomal subunit and prevents its association with the 40S ribosomal subunit to form the 80S initiation complex in the cytoplasm. May also be involved in ribosome biogenesis. This chain is Eukaryotic translation initiation factor 6, found in Toxoplasma gondii (strain ATCC 50861 / VEG).